The sequence spans 751 residues: WD repeat-containing protein 91 (751 aa).

A coiled-coil region spans residues 183–205 (QKIACLQEENEIMRQKLFALQAE). Residues 237-398 (ELGSNIMSSH…GARKEEKPAQ (162 aa)) are disordered. Over residues 238-267 (LGSNIMSSHSNTNMNTPSQRTSGFLSSLLA) the composition is skewed to polar residues. Residues 356–373 (TEKKAENSDADPDLRSDT) are compositionally biased toward basic and acidic residues. WD repeat units follow at residues 410–449 (EHHS…QTKA), 452–492 (ISKS…NLCE), 517–559 (SAAA…QQLQ), 564–603 (PVPI…CALS), 606–645 (AHMG…QKVS), 668–706 (VQFP…STLE), and 713–751 (GHRA…AQKS).

This sequence belongs to the WD repeat WDR91 family.

Its subcellular location is the early endosome membrane. The protein resides in the late endosome membrane. In terms of biological role, functions as a negative regulator of the PI3 kinase/PI3K activity associated with endosomal membranes. By modifying the phosphatidylinositol 3-phosphate/PtdInsP3 content of endosomal membranes may regulate endosome fusion, recycling, sorting and early to late endosome transport. This chain is WD repeat-containing protein 91, found in Xenopus tropicalis (Western clawed frog).